Reading from the N-terminus, the 164-residue chain is MEVIRDGEGESVKYKPGGRLDMSHGFLRHIRRNQIARDDYDREVKQAKEKQRRRHTNTPRRPRRPDRQVYNPRIRNGSEPGVNAEAEDWNESSSGTEMENTGTELFWLDYQADNGKITSFIVHKEDKPEVIVQRVAEKNVLDSSMRAALLARVGQEMNKRCDKR.

Composition is skewed to basic and acidic residues over residues 1–13 (MEVIRDGEGESVK) and 35–49 (IARDDYDREVKQAKE). The tract at residues 1–98 (MEVIRDGEGE…WNESSSGTEM (98 aa)) is disordered. Basic residues predominate over residues 50–64 (KQRRRHTNTPRRPRR).

This sequence belongs to the UPF0561 family.

The chain is UPF0561 protein C2orf68 homolog from Danio rerio (Zebrafish).